The primary structure comprises 140 residues: Large ribosomal subunit protein uL16 (140 aa).

The protein belongs to the universal ribosomal protein uL16 family. As to quaternary structure, part of the 50S ribosomal subunit.

Functionally, binds 23S rRNA and is also seen to make contacts with the A and possibly P site tRNAs. The protein is Large ribosomal subunit protein uL16 of Trichlorobacter lovleyi (strain ATCC BAA-1151 / DSM 17278 / SZ) (Geobacter lovleyi).